Here is a 540-residue protein sequence, read N- to C-terminus: Bifunctional purine biosynthesis protein PurH (540 aa).

One can recognise an MGS-like domain in the interval 1–144 (MKRALISVYD…KNYQDVGVVV (144 aa)). Residues 204–224 (ETAPERPIGADPGPQKPAAPS) are disordered.

This sequence belongs to the PurH family.

It carries out the reaction (6R)-10-formyltetrahydrofolate + 5-amino-1-(5-phospho-beta-D-ribosyl)imidazole-4-carboxamide = 5-formamido-1-(5-phospho-D-ribosyl)imidazole-4-carboxamide + (6S)-5,6,7,8-tetrahydrofolate. The enzyme catalyses IMP + H2O = 5-formamido-1-(5-phospho-D-ribosyl)imidazole-4-carboxamide. Its pathway is purine metabolism; IMP biosynthesis via de novo pathway; 5-formamido-1-(5-phospho-D-ribosyl)imidazole-4-carboxamide from 5-amino-1-(5-phospho-D-ribosyl)imidazole-4-carboxamide (10-formyl THF route): step 1/1. The protein operates within purine metabolism; IMP biosynthesis via de novo pathway; IMP from 5-formamido-1-(5-phospho-D-ribosyl)imidazole-4-carboxamide: step 1/1. This chain is Bifunctional purine biosynthesis protein PurH, found in Symbiobacterium thermophilum (strain DSM 24528 / JCM 14929 / IAM 14863 / T).